A 147-amino-acid chain; its full sequence is Myoglobin (147 aa).

Residues 2-141 form the Globin domain; sequence HDAELVLKCW…VIGDIDTYYK (140 aa). Histidine 60 contributes to the nitrite binding site. Histidine 60 is a binding site for O2. A heme b-binding site is contributed by histidine 89.

The protein belongs to the globin family. Monomeric.

It is found in the cytoplasm. The protein resides in the sarcoplasm. The catalysed reaction is Fe(III)-heme b-[protein] + nitric oxide + H2O = Fe(II)-heme b-[protein] + nitrite + 2 H(+). The enzyme catalyses H2O2 + AH2 = A + 2 H2O. Functionally, monomeric heme protein which primary function is to store oxygen and facilitate its diffusion within muscle tissues. Reversibly binds oxygen through a pentacoordinated heme iron and enables its timely and efficient release as needed during periods of heightened demand. Depending on the oxidative conditions of tissues and cells, and in addition to its ability to bind oxygen, it also has a nitrite reductase activity whereby it regulates the production of bioactive nitric oxide. Under stress conditions, like hypoxia and anoxia, it also protects cells against reactive oxygen species thanks to its pseudoperoxidase activity. The sequence is that of Myoglobin (mb) from Cyprinus carpio (Common carp).